Consider the following 159-residue polypeptide: NADH-quinone oxidoreductase subunit I (159 aa).

4Fe-4S ferredoxin-type domains follow at residues 51 to 80 (RRYENGEERCIACKLCEAICPAQAIVIEAD) and 90 to 119 (TRYDIDMTKCIYCGLCQEACPVDAIVEGPN). 8 residues coordinate [4Fe-4S] cluster: C60, C63, C66, C70, C99, C102, C105, and C109.

The protein belongs to the complex I 23 kDa subunit family. In terms of assembly, NDH-1 is composed of 14 different subunits. Subunits NuoA, H, J, K, L, M, N constitute the membrane sector of the complex. The cofactor is [4Fe-4S] cluster.

It is found in the cell inner membrane. It carries out the reaction a quinone + NADH + 5 H(+)(in) = a quinol + NAD(+) + 4 H(+)(out). NDH-1 shuttles electrons from NADH, via FMN and iron-sulfur (Fe-S) centers, to quinones in the respiratory chain. The immediate electron acceptor for the enzyme in this species is believed to be ubiquinone. Couples the redox reaction to proton translocation (for every two electrons transferred, four hydrogen ions are translocated across the cytoplasmic membrane), and thus conserves the redox energy in a proton gradient. This chain is NADH-quinone oxidoreductase subunit I, found in Rickettsia felis (strain ATCC VR-1525 / URRWXCal2) (Rickettsia azadi).